The following is a 283-amino-acid chain: Small ribosomal subunit protein uS2B (283 aa).

Residues 254–283 (GQVGQSAWDEEGDWNTTGAAQTSDWANTVA) form a disordered region. Residues 267–283 (WNTTGAAQTSDWANTVA) are compositionally biased toward polar residues.

The protein belongs to the universal ribosomal protein uS2 family. As to quaternary structure, component of the small ribosomal subunit. Mature ribosomes consist of a small (40S) and a large (60S) subunit. The 40S subunit contains about 33 different proteins and 1 molecule of RNA (18S). The 60S subunit contains about 49 different proteins and 3 molecules of RNA (25S, 5.8S and 5S). Interacts with rps21.

The protein localises to the cytoplasm. Required for the assembly and/or stability of the 40S ribosomal subunit. Required for the processing of the 20S rRNA-precursor to mature 18S rRNA in a late step of the maturation of 40S ribosomal subunits. The polypeptide is Small ribosomal subunit protein uS2B (rps0b) (Schizosaccharomyces japonicus (strain yFS275 / FY16936) (Fission yeast)).